Consider the following 568-residue polypeptide: 2-succinyl-5-enolpyruvyl-6-hydroxy-3-cyclohexene-1-carboxylate synthase (568 aa).

It belongs to the TPP enzyme family. MenD subfamily. Homodimer. Mg(2+) serves as cofactor. Mn(2+) is required as a cofactor. It depends on thiamine diphosphate as a cofactor.

The enzyme catalyses isochorismate + 2-oxoglutarate + H(+) = 5-enolpyruvoyl-6-hydroxy-2-succinyl-cyclohex-3-ene-1-carboxylate + CO2. The protein operates within quinol/quinone metabolism; 1,4-dihydroxy-2-naphthoate biosynthesis; 1,4-dihydroxy-2-naphthoate from chorismate: step 2/7. It functions in the pathway quinol/quinone metabolism; menaquinone biosynthesis. Its function is as follows. Catalyzes the thiamine diphosphate-dependent decarboxylation of 2-oxoglutarate and the subsequent addition of the resulting succinic semialdehyde-thiamine pyrophosphate anion to isochorismate to yield 2-succinyl-5-enolpyruvyl-6-hydroxy-3-cyclohexene-1-carboxylate (SEPHCHC). The chain is 2-succinyl-5-enolpyruvyl-6-hydroxy-3-cyclohexene-1-carboxylate synthase from Actinobacillus pleuropneumoniae serotype 5b (strain L20).